A 394-amino-acid chain; its full sequence is Lipase 3 (394 aa).

Positions 1–20 are cleaved as a signal peptide; that stretch reads MTRGALKVTILLVGLGLVLA. Asn-131 carries N-linked (GlcNAc...) asparagine glycosylation. Residues Ser-164 and His-369 each act as charge relay system in the active site.

This sequence belongs to the AB hydrolase superfamily. Lipase family. In terms of tissue distribution, fat body.

This chain is Lipase 3 (Lip3), found in Drosophila melanogaster (Fruit fly).